Consider the following 503-residue polypeptide: Maturase K (503 aa).

It belongs to the intron maturase 2 family. MatK subfamily.

The protein resides in the plastid. It localises to the chloroplast. Functionally, usually encoded in the trnK tRNA gene intron. Probably assists in splicing its own and other chloroplast group II introns. This Eucalyptus globulus subsp. globulus (Tasmanian blue gum) protein is Maturase K.